The following is a 630-amino-acid chain: Betaine/ectoine transporter LcoP (630 aa).

A compositionally biased stretch (polar residues) spans 1 to 13 (MSTNSGNNLPESQ). The disordered stretch occupies residues 1–28 (MSTNSGNNLPESQESPEEPHYPHDTHPG). Residues 17 to 26 (EEPHYPHDTH) are compositionally biased toward basic and acidic residues. The next 12 helical transmembrane spans lie at 47–67 (TVFG…ISSP), 85–105 (TGWL…YIAF), 125–145 (FSWI…FFGP), 177–197 (FHWG…LAYS), 230–250 (MAII…AIQV), 267–287 (ILIA…VSGV), 299–319 (ISLT…LFLL), 354–374 (WTAF…MFIA), 385–405 (FALI…TIFG), 436–456 (LPLY…FFVT), 479–499 (LIVV…LLTG), and 510–530 (LTIL…IAFI). The disordered stretch occupies residues 611-630 (WADGWTPESTEEGEVDAKKD).

This sequence belongs to the BCCT transporter (TC 2.A.15) family.

It localises to the cell membrane. Its activity is regulated as follows. Uptake is activated by hyperosmotic stress. Shows a small but significant chill stimulation around 15 degrees Celsius. In terms of biological role, involved in the uptake of osmoprotectants. Can transport betaine and ectoine. Na(+) is probably the coupling ion. The protein is Betaine/ectoine transporter LcoP of Corynebacterium glutamicum (strain ATCC 13032 / DSM 20300 / JCM 1318 / BCRC 11384 / CCUG 27702 / LMG 3730 / NBRC 12168 / NCIMB 10025 / NRRL B-2784 / 534).